Consider the following 191-residue polypeptide: MTSATPQPGQLIVITGPSGVGKGTLLRQLRQRHPELALSVSATTRPPRPTEVAGVDYYFVSVEEFKAMIAAGQLLEWAEFAGHYYGTPRQPLVQLIAQGKTVILEIELQGARQVRQSYPQARHIFILPPSLAELEHRLRSRGQDSEEAIARRLAQAETEIAAAPEFDVQIVNDDLEKSLIALETAIFSPAP.

One can recognise a Guanylate kinase-like domain in the interval 9–187 (GQLIVITGPS…SLIALETAIF (179 aa)). 16 to 23 (GPSGVGKG) is a binding site for ATP.

The protein belongs to the guanylate kinase family.

It is found in the cytoplasm. It carries out the reaction GMP + ATP = GDP + ADP. Essential for recycling GMP and indirectly, cGMP. This Thermosynechococcus vestitus (strain NIES-2133 / IAM M-273 / BP-1) protein is Guanylate kinase.